The following is a 182-amino-acid chain: Transcription antitermination protein NusB (182 aa).

Residues 159–182 (TPVENSEAEAAGYPVEESIEEDSQ) form a disordered region.

The protein belongs to the NusB family.

Its function is as follows. Involved in transcription antitermination. Required for transcription of ribosomal RNA (rRNA) genes. Binds specifically to the boxA antiterminator sequence of the ribosomal RNA (rrn) operons. The chain is Transcription antitermination protein NusB from Corynebacterium diphtheriae (strain ATCC 700971 / NCTC 13129 / Biotype gravis).